Here is a 468-residue protein sequence, read N- to C-terminus: Monocarboxylate transporter 6 (468 aa).

Residues 1-13 (MARALEQADGRWA) are Cytoplasmic-facing. Residues 14–34 (WVVLLSSLVTQALTLGFPTCI) form a helical membrane-spanning segment. Residues 35–53 (GVFFTDLQRDFQASNSETS) lie on the Extracellular side of the membrane. The chain crosses the membrane as a helical span at residues 54 to 74 (WFPSILGAMVHGGGPLCSILV). The Cytoplasmic portion of the chain corresponds to 75 to 80 (KHFGCR). A helical membrane pass occupies residues 81–101 (VTMMLGGVLASLGMVVSTFSG). Residue Ser-102 is a topological domain, extracellular. The chain crosses the membrane as a helical span at residues 103 to 122 (LTHLFLTAGVITGLGMCFSF). The Cytoplasmic segment spans residues 123-138 (QSSITVVGLYFVRRRP). The helical transmembrane segment at 139 to 159 (LANALASMGLSMGVTLWPLLA) threads the bilayer. The Extracellular portion of the chain corresponds to 160 to 171 (RYLLETLGWRGA). Residues 172–192 (FLIFGGILLHCCVCGALLRPV) traverse the membrane as a helical segment. Over 193–239 (ATNEVPEPKEDPLLPPKIPTRSCLATCVSTIRYHLAFDILRHNMGFC) the chain is Cytoplasmic. Residues 240 to 260 (IYVTGVTWMNLGFALPHIFLV) form a helical membrane-spanning segment. The Extracellular segment spans residues 261–274 (PYAMHHGVDDYWAA). The chain crosses the membrane as a helical span at residues 275–295 (MLMSIVGFCNIFLRPMAGLLL). Topologically, residues 296–306 (AGRKSLAAYRK) are cytoplasmic. Residues 307-327 (YLFAVAILINGLTNLICTVSA) form a helical membrane-spanning segment. The Extracellular segment spans residues 328 to 330 (DFR). The helical transmembrane segment at 331-351 (VLLGYCLVYSLSMCGVGILVF) threads the bilayer. Topologically, residues 352–368 (QVLMDIVPMDRFPSALG) are cytoplasmic. Residues 369-389 (LFTILCGVTSLISPPLAGLLL) form a helical membrane-spanning segment. Topologically, residues 390–396 (DKTNNFS) are extracellular. The chain crosses the membrane as a helical span at residues 397–417 (YVFYMSSGFLVSGSLILGVGF). At 418–468 (YAAEKKKLKQDGQAKMENATSEMTPMHDLTSEDKDSAKKQPYPESIYMTNV) the chain is on the cytoplasmic side. Residues 429 to 468 (GQAKMENATSEMTPMHDLTSEDKDSAKKQPYPESIYMTNV) form a disordered region. The span at 446 to 455 (LTSEDKDSAK) shows a compositional bias: basic and acidic residues.

The protein belongs to the major facilitator superfamily. Monocarboxylate porter (TC 2.A.1.13) family.

The protein resides in the cell membrane. Proton-linked monocarboxylate transporter. Catalyzes the rapid transport across the plasma membrane of many monocarboxylates such as lactate, pyruvate, branched-chain oxo acids derived from leucine, valine and isoleucine, and the ketone bodies acetoacetate, beta-hydroxybutyrate and acetate. In Mus musculus (Mouse), this protein is Monocarboxylate transporter 6 (Slc16a5).